Reading from the N-terminus, the 810-residue chain is Chloride channel protein (810 aa).

At 2 to 48 (SHEKNEASGNPEAQSWKAQEAMLGVKTEVSRWRAVKNCLYRHLVKVL) the chain is on the cytoplasmic side. The next 2 membrane-spanning stretches (helical) occupy residues 49 to 86 (GEDW…LFAM) and 93 to 116 (LQYL…CQIV). The Selectivity filter part_1 motif lies at 122–126 (GSGIP). Ser-123 is a binding site for chloride. Residues 125-132 (IPELKTII) constitute an intramembrane region (helical). 2 consecutive transmembrane segments (helical) span residues 141 to 160 (LTLR…LSAG) and 166 to 184 (EGPF…NQLL). Positions 164 to 168 (GKEGP) match the Selectivity filter part_2 motif. 2 intramembrane regions (helical) span residues 201–213 (ILTV…ISCC) and 217–225 (PLAGVLFSI). 3 consecutive transmembrane segments (helical) span residues 237-254 (YWRG…FRVL), 283-311 (LPAF…IVFM), and 320-339 (ILKK…LATL). Asn-365 carries an N-linked (GlcNAc...) asparagine glycan. Transmembrane regions (helical) follow at residues 389-408 (NIFI…AALA) and 416-439 (GAFV…MALL). The Selectivity filter part_3 signature appears at 416–420 (GAFVP). Residue Phe-418 coordinates chloride. An intramembrane region (helical) is located at residues 456–470 (GEYAVIGAAAMTGAV). An intramembrane region (note=Loop between two helices) is located at residues 471-472 (TH). An intramembrane region (helical) is located at residues 473-484 (AVSTAVICFELT). An intramembrane region (note=Loop between two helices) is located at residues 485–489 (GQISH). A helical membrane pass occupies residues 490–506 (VLPMMVAVILANMVAQG). The Cytoplasmic portion of the chain corresponds to 507–810 (LQPSLYDSII…RTATSNSSGK (304 aa)). Tyr-512 provides a ligand contact to chloride. Residues 543-601 (MVRDVTSIASTSTYGDLLHVLRQTKLKFFPFVDTPETNTLLGSIERTEVEGLLQRRISA) form the CBS 1 domain. Disordered stretches follow at residues 604–631 (RQPA…DVPG) and 658–688 (KVQT…KHKG). The CBS 2 domain occupies 724–781 (IDQSPFQLVEGTSLQKTHTLFSLLGLDRAYVTSMGKLVGVVALAEIQAAIEGSYQKGF).

The protein belongs to the chloride channel (TC 2.A.49) family. ClC-0 subfamily. As to quaternary structure, homodimer. Each subunit has channel activity ('Double barreled channel').

The protein localises to the membrane. Functionally, voltage-gated chloride channel. This channel is thought to ensure the high conductance of the non-innervated membrane of the electrocyte necessary for efficient current generation caused by sodium influx through the acetylcholine receptor at the innervated membrane. The polypeptide is Chloride channel protein (Tetronarce californica (Pacific electric ray)).